Here is a 262-residue protein sequence, read N- to C-terminus: Shikimate dehydrogenase (NADP(+)) (262 aa).

Residues 14-16 and Thr60 each bind shikimate; that span reads SAS. Lys64 (proton acceptor) is an active-site residue. Residues Asn85 and Asp100 each coordinate shikimate. Residues 121-125, 145-150, and Phe203 each bind NADP(+); these read GAGGA and NRTAER. Residue Tyr205 participates in shikimate binding. Gly227 is an NADP(+) binding site.

The protein belongs to the shikimate dehydrogenase family. Homodimer.

The enzyme catalyses shikimate + NADP(+) = 3-dehydroshikimate + NADPH + H(+). It participates in metabolic intermediate biosynthesis; chorismate biosynthesis; chorismate from D-erythrose 4-phosphate and phosphoenolpyruvate: step 4/7. Its function is as follows. Involved in the biosynthesis of the chorismate, which leads to the biosynthesis of aromatic amino acids. Catalyzes the reversible NADPH linked reduction of 3-dehydroshikimate (DHSA) to yield shikimate (SA). The protein is Shikimate dehydrogenase (NADP(+)) of Pyrobaculum aerophilum (strain ATCC 51768 / DSM 7523 / JCM 9630 / CIP 104966 / NBRC 100827 / IM2).